The following is a 119-amino-acid chain: Large ribosomal subunit protein uL18 (119 aa).

It belongs to the universal ribosomal protein uL18 family. In terms of assembly, part of the 50S ribosomal subunit; part of the 5S rRNA/L5/L18/L25 subcomplex. Contacts the 5S and 23S rRNAs.

Its function is as follows. This is one of the proteins that bind and probably mediate the attachment of the 5S RNA into the large ribosomal subunit, where it forms part of the central protuberance. The polypeptide is Large ribosomal subunit protein uL18 (Borreliella afzelii (strain PKo) (Borrelia afzelii)).